The sequence spans 136 residues: Globin-2 (136 aa).

Residues 1-134 enclose the Globin domain; that stretch reads VSQADIAAVQ…ILSQMKIALS (134 aa). Histidine 89 is a heme b binding site.

Belongs to the globin family. Homodimer.

The polypeptide is Globin-2 (Phreagena soyoae (Deep-sea cold-seep clam)).